The sequence spans 375 residues: Probable butyrate kinase 2 (375 aa).

This sequence belongs to the acetokinase family.

It localises to the cytoplasm. It catalyses the reaction butanoate + ATP = butanoyl phosphate + ADP. The polypeptide is Probable butyrate kinase 2 (Thermotoga maritima (strain ATCC 43589 / DSM 3109 / JCM 10099 / NBRC 100826 / MSB8)).